Reading from the N-terminus, the 460-residue chain is Argininosuccinate lyase (460 aa).

This sequence belongs to the lyase 1 family. Argininosuccinate lyase subfamily.

The protein resides in the cytoplasm. It carries out the reaction 2-(N(omega)-L-arginino)succinate = fumarate + L-arginine. It participates in amino-acid biosynthesis; L-arginine biosynthesis; L-arginine from L-ornithine and carbamoyl phosphate: step 3/3. The sequence is that of Argininosuccinate lyase from Lacticaseibacillus paracasei (strain ATCC 334 / BCRC 17002 / CCUG 31169 / CIP 107868 / KCTC 3260 / NRRL B-441) (Lactobacillus paracasei).